Here is a 249-residue protein sequence, read N- to C-terminus: 3-deoxy-manno-octulosonate cytidylyltransferase (249 aa).

This sequence belongs to the KdsB family.

The protein resides in the cytoplasm. It catalyses the reaction 3-deoxy-alpha-D-manno-oct-2-ulosonate + CTP = CMP-3-deoxy-beta-D-manno-octulosonate + diphosphate. It functions in the pathway nucleotide-sugar biosynthesis; CMP-3-deoxy-D-manno-octulosonate biosynthesis; CMP-3-deoxy-D-manno-octulosonate from 3-deoxy-D-manno-octulosonate and CTP: step 1/1. It participates in bacterial outer membrane biogenesis; lipopolysaccharide biosynthesis. Activates KDO (a required 8-carbon sugar) for incorporation into bacterial lipopolysaccharide in Gram-negative bacteria. This chain is 3-deoxy-manno-octulosonate cytidylyltransferase, found in Brucella anthropi (strain ATCC 49188 / DSM 6882 / CCUG 24695 / JCM 21032 / LMG 3331 / NBRC 15819 / NCTC 12168 / Alc 37) (Ochrobactrum anthropi).